Consider the following 138-residue polypeptide: Actophorin (138 aa).

The region spanning 3–134 (GIQLADEVTS…NLDEVIAKVK (132 aa)) is the ADF-H domain.

Belongs to the actin-binding proteins ADF family. In terms of assembly, interacts with F-actin. Does not interact with G-actin. Interacts with 14-3-3 protein 3.

It is found in the cytoplasm. The protein resides in the cytoskeleton. It localises to the cell membrane. The protein localises to the cell projection. Its subcellular location is the phagocytic cup. It is found in the pseudopodium. In terms of biological role, actin-binding protein that severs actin filaments. This is Actophorin from Entamoeba histolytica (strain ATCC 30459 / HM-1:IMSS / ABRM).